Consider the following 94-residue polypeptide: Small ribosomal subunit protein uS19 (94 aa).

It belongs to the universal ribosomal protein uS19 family.

Protein S19 forms a complex with S13 that binds strongly to the 16S ribosomal RNA. This Anaplasma phagocytophilum (strain HZ) protein is Small ribosomal subunit protein uS19.